A 368-amino-acid chain; its full sequence is Flagellar P-ring protein (368 aa).

Positions 1–24 (MDKPMKRIFVVLVILLVLPQLALA) are cleaved as a signal peptide.

This sequence belongs to the FlgI family. In terms of assembly, the basal body constitutes a major portion of the flagellar organelle and consists of four rings (L,P,S, and M) mounted on a central rod.

The protein resides in the periplasm. Its subcellular location is the bacterial flagellum basal body. Assembles around the rod to form the L-ring and probably protects the motor/basal body from shearing forces during rotation. The protein is Flagellar P-ring protein of Geobacter sulfurreducens (strain ATCC 51573 / DSM 12127 / PCA).